The sequence spans 287 residues: 3-beta-hydroxysteroid sulfotransferase (287 aa).

44 to 49 is a 3'-phosphoadenylyl sulfate binding site; it reads KSGTNW. Substrate-binding residues include Trp-72 and Trp-77. The active-site Proton acceptor is His-99. Residues Arg-121, Ser-129, Tyr-184, 218–223, and 247–249 each bind 3'-phosphoadenylyl sulfate; these read SSFKFM and RKG.

The protein belongs to the sulfotransferase 1 family. Homodimer. As to expression, liver, intestine and kidney.

Its subcellular location is the cytoplasm. The catalysed reaction is an alcohol + 3'-phosphoadenylyl sulfate = an alkyl sulfate + adenosine 3',5'-bisphosphate + H(+). Functionally, sulfotransferase that utilizes 3'-phospho-5'-adenylyl sulfate (PAPS) as sulfonate donor to catalyze the sulfonation of 3-beta-hydroxyl groups of neutral steroids. High preference for C21 steroid (pregnenolone). The protein is 3-beta-hydroxysteroid sulfotransferase (STD2) of Cavia porcellus (Guinea pig).